Consider the following 516-residue polypeptide: Putative transposase y4bL/y4kJ/y4tB (516 aa).

The HTH IS408-type domain occupies 15–96 (IRTILRLTHE…PDWALVVREL (82 aa)). Positions 138–319 (FRNRHAAGAV…SRRELFEEIE (182 aa)) constitute an Integrase catalytic domain. A disordered region spans residues 493 to 516 (ERPQAEHAAPTPAHTNIRGRSYYQ).

Belongs to the transposase IS21/IS408/IS1162 family.

The protein is Putative transposase y4bL/y4kJ/y4tB of Sinorhizobium fredii (strain NBRC 101917 / NGR234).